A 946-amino-acid chain; its full sequence is Structure-specific endonuclease subunit SLX4 (946 aa).

The span at 1-14 (MPASPLPALSPPAS) shows a compositional bias: pro residues. Disordered regions lie at residues 1-35 (MPAS…IPPD), 54-119 (QHFD…EEAV), 147-318 (PSDE…GGFT), 339-399 (ADSA…AAQL), 416-471 (TKVP…PKHI), 577-748 (FPLL…GSGR), and 765-799 (ALSP…KADS). Residues 54 to 74 (QHFDDDIAGKDQEQSRKKSPE) are compositionally biased toward basic and acidic residues. Basic residues-rich tracts occupy residues 160 to 169 (KAGKPRKPRA) and 182 to 195 (KPKR…KAAK). Positions 278-287 (AVSRRRDWTP) are enriched in basic and acidic residues. Positions 453 to 469 (SKARSKKASTKAAAKPK) are enriched in basic residues. A compositionally biased stretch (basic and acidic residues) spans 627-636 (KANDEPDHVM). The span at 707–717 (KSQSAIATSGS) shows a compositional bias: polar residues. A compositionally biased stretch (basic and acidic residues) spans 722–733 (KEPKRTKGKEVK).

The protein belongs to the SLX4 family. In terms of assembly, forms a heterodimer with SLX1. Post-translationally, phosphorylated in response to DNA damage.

It localises to the nucleus. In terms of biological role, regulatory subunit of the SLX1-SLX4 structure-specific endonuclease that resolves DNA secondary structures generated during DNA repair and recombination. Has endonuclease activity towards branched DNA substrates, introducing single-strand cuts in duplex DNA close to junctions with ss-DNA. In Phaeosphaeria nodorum (strain SN15 / ATCC MYA-4574 / FGSC 10173) (Glume blotch fungus), this protein is Structure-specific endonuclease subunit SLX4.